We begin with the raw amino-acid sequence, 1369 residues long: Serine/threonine-protein kinase SIK3 (1369 aa).

A disordered region spans residues 26-55; the sequence is LLPPPAAGPPAAPAAVPPAAVPARPTAPAS. A compositionally biased stretch (pro residues) spans 27 to 45; sequence LPPPAAGPPAAPAAVPPAA. The span at 46-55 shows a compositional bias: low complexity; it reads VPARPTAPAS. Residues 66–317 form the Protein kinase domain; the sequence is YEIDRTIGKG…MEQICRHKWM (252 aa). The residue at position 71 (Thr71) is a Phosphothreonine. ATP-binding positions include 72–80 and Lys95; that span reads IGKGNFAVV. Catalysis depends on Asp188, which acts as the Proton acceptor. A Phosphothreonine modification is found at Thr221. The UBA domain occupies 344-384; sequence PLNDDVLLAMEDMGLDKERTLQSLRSDAYDHYSAIYSLLCD. At Thr469 the chain carries Phosphothreonine. Residues Ser551, Ser591, Ser592, Ser674, and Ser695 each carry the phosphoserine modification. The segment at 775–821 is disordered; that stretch reads IQPSSPPPNHPSNHLFRQPSNSPPPVSSAMITSHGATSPSQFQGLPS. The span at 803-818 shows a compositional bias: polar residues; that stretch reads AMITSHGATSPSQFQG. A Phosphoserine modification is found at Ser914. The segment at 942–993 is disordered; the sequence is LFSDQSRGSPSSYSPSTGVGFPPTQALKVPPLDQFPTFPPSAQQQPPHYTTS. Over residues 944 to 957 the composition is skewed to low complexity; it reads SDQSRGSPSSYSPS. The span at 981–993 shows a compositional bias: polar residues; sequence PSAQQQPPHYTTS. At Ser1026 the chain carries Phosphoserine. An Omega-N-methylarginine modification is found at Arg1034. Positions 1314 to 1338 are disordered; the sequence is DEEDEECGVSLGHEHPGLGDGSQHL.

This sequence belongs to the protein kinase superfamily. CAMK Ser/Thr protein kinase family. SNF1 subfamily. As to quaternary structure, binds to and is activated by YWHAZ when phosphorylated on Thr-221. Interacts with 14-3-3 proteins. Interacts with HDAC4; this interaction leads to HDAC4 retention in the cytoplasm. Interacts with DEPTOR, MLST8/GbetaL, RICTOR and RPTOR. Mg(2+) is required as a cofactor. Post-translationally, phosphorylated at Thr-221 by STK11/LKB1 in complex with STE20-related adapter-alpha (STRADA) pseudo kinase and CAB39. As to expression, expressed in hypertrophic chondrocytes in the growth plate.

It localises to the cytoplasm. It carries out the reaction L-seryl-[protein] + ATP = O-phospho-L-seryl-[protein] + ADP + H(+). The enzyme catalyses L-threonyl-[protein] + ATP = O-phospho-L-threonyl-[protein] + ADP + H(+). Activated by phosphorylation on Thr-221. Positive regulator of mTOR signaling that functions by triggering the degradation of DEPTOR, an mTOR inhibitor. Required for chondrocyte hypertrophy during skeletogenesis. Negatively regulates cAMP signaling pathway possibly by acting on CRTC2/TORC2 and CRTC3/TORC3. Prevents HDAC4 translocation to the nucleus. The protein is Serine/threonine-protein kinase SIK3 (Sik3) of Mus musculus (Mouse).